The chain runs to 419 residues: UDP-N-acetylglucosamine 1-carboxyvinyltransferase (419 aa).

22–23 (KN) contributes to the phosphoenolpyruvate binding site. Arg91 is a UDP-N-acetyl-alpha-D-glucosamine binding site. The Proton donor role is filled by Cys115. The residue at position 115 (Cys115) is a 2-(S-cysteinyl)pyruvic acid O-phosphothioketal. UDP-N-acetyl-alpha-D-glucosamine contacts are provided by residues 120 to 124 (RPVDL), 160 to 163 (KVSV), Asp305, and Ile327.

This sequence belongs to the EPSP synthase family. MurA subfamily.

The protein localises to the cytoplasm. It catalyses the reaction phosphoenolpyruvate + UDP-N-acetyl-alpha-D-glucosamine = UDP-N-acetyl-3-O-(1-carboxyvinyl)-alpha-D-glucosamine + phosphate. The protein operates within cell wall biogenesis; peptidoglycan biosynthesis. Its activity is regulated as follows. In vitro inhibited by covalent binding of fosfomycin and the fungal product terreic acid in the presence of substrate UDP-N-acetylglucosamine, with an inactivation rate constant of 130 M(-1)sec(-1) for terreic acid. Its function is as follows. Cell wall formation. Adds enolpyruvyl to UDP-N-acetylglucosamine. Target for the antibiotic fosfomycin. The chain is UDP-N-acetylglucosamine 1-carboxyvinyltransferase from Enterobacter cloacae subsp. cloacae (strain ATCC 13047 / DSM 30054 / NBRC 13535 / NCTC 10005 / WDCM 00083 / NCDC 279-56).